The chain runs to 488 residues: Glutamate--tRNA ligase (488 aa).

A 'HIGH' region motif is present at residues 11–21 (PSPTGQIHIGN). Zn(2+) is bound by residues cysteine 108, cysteine 110, cysteine 135, and aspartate 137. Positions 252-256 (KLSKR) match the 'KMSKS' region motif. ATP is bound at residue lysine 255.

The protein belongs to the class-I aminoacyl-tRNA synthetase family. Glutamate--tRNA ligase type 1 subfamily. As to quaternary structure, monomer. The cofactor is Zn(2+).

The protein resides in the cytoplasm. The enzyme catalyses tRNA(Glu) + L-glutamate + ATP = L-glutamyl-tRNA(Glu) + AMP + diphosphate. Its function is as follows. Catalyzes the attachment of glutamate to tRNA(Glu) in a two-step reaction: glutamate is first activated by ATP to form Glu-AMP and then transferred to the acceptor end of tRNA(Glu). The chain is Glutamate--tRNA ligase from Natranaerobius thermophilus (strain ATCC BAA-1301 / DSM 18059 / JW/NM-WN-LF).